The following is a 220-amino-acid chain: 7-cyano-7-deazaguanine synthase (220 aa).

7 to 17 (LSGGMDSSITA) provides a ligand contact to ATP. Zn(2+) is bound by residues C185, C193, C196, and C199.

Belongs to the QueC family. Zn(2+) is required as a cofactor.

It catalyses the reaction 7-carboxy-7-deazaguanine + NH4(+) + ATP = 7-cyano-7-deazaguanine + ADP + phosphate + H2O + H(+). The protein operates within purine metabolism; 7-cyano-7-deazaguanine biosynthesis. In terms of biological role, catalyzes the ATP-dependent conversion of 7-carboxy-7-deazaguanine (CDG) to 7-cyano-7-deazaguanine (preQ(0)). This chain is 7-cyano-7-deazaguanine synthase, found in Nitratiruptor sp. (strain SB155-2).